A 279-amino-acid polypeptide reads, in one-letter code: Large ribosomal subunit protein uL2 (279 aa).

Positions 223 to 279 are disordered; sequence VVMNPVDHPHGGGEGRTSGGRHPVSPWGQPTKGYKTRRSARPSDKFIVQKRKRNRNR. Over residues 270-279 the composition is skewed to basic residues; sequence VQKRKRNRNR.

The protein belongs to the universal ribosomal protein uL2 family. In terms of assembly, part of the 50S ribosomal subunit. Forms a bridge to the 30S subunit in the 70S ribosome.

Functionally, one of the primary rRNA binding proteins. Required for association of the 30S and 50S subunits to form the 70S ribosome, for tRNA binding and peptide bond formation. It has been suggested to have peptidyltransferase activity; this is somewhat controversial. Makes several contacts with the 16S rRNA in the 70S ribosome. The protein is Large ribosomal subunit protein uL2 of Leptospira borgpetersenii serovar Hardjo-bovis (strain JB197).